Reading from the N-terminus, the 109-residue chain is SKSSTETPPSYNQLNYNENLQRFFNSKPITAPVDVDPHEVEQSYDASTDARSFRSPLRHFEGSGGSGSSGNFNSGSNLHIGSITNTSNTGTGTSSGSVQLITLTESLLN.

The disordered stretch occupies residues 29-100 (ITAPVDVDPH…TGTSSGSVQL (72 aa)). The segment covering 69–97 (SGNFNSGSNLHIGSITNTSNTGTGTSSGS) has biased composition (low complexity).

As to quaternary structure, forms a heterodimer with timeless (TIM); the complex then translocates into the nucleus. Post-translationally, phosphorylated with a circadian rhythmicity, probably by the double-time protein (dbt). Phosphorylation could be implicated in the stability of per monomer and in the formation of heterodimer per-tim.

The protein localises to the nucleus. It localises to the cytoplasm. It is found in the perinuclear region. Its function is as follows. Essential for biological clock functions. Determines the period length of circadian and ultradian rhythms; an increase in PER dosage leads to shortened circadian rhythms and a decrease leads to lengthened circadian rhythms. Essential for the circadian rhythmicity of locomotor activity, eclosion behavior, and for the rhythmic component of the male courtship song that originates in the thoracic nervous system. The biological cycle depends on the rhythmic formation and nuclear localization of the TIM-PER complex. Light induces the degradation of TIM, which promotes elimination of PER. Nuclear activity of the heterodimer coordinatively regulates PER and TIM transcription through a negative feedback loop. Behaves as a negative element in circadian transcriptional loop. Does not appear to bind DNA, suggesting indirect transcriptional inhibition. This Loxocera albiseta (Rust fly) protein is Period circadian protein (per).